The sequence spans 224 residues: Peroxiredoxin-6 (224 aa).

One can recognise a Thioredoxin domain in the interval 5–169 (LLLGDEAPNF…ILRVVDSLQL (165 aa)). The required and sufficient for targeting to lysosomes and lamellar bodies stretch occupies residues 31–40 (DSWGILFSHP). A Phosphothreonine modification is found at T44. C47 serves as the catalytic Cysteine sulfenic acid (-SOH) intermediate; for peroxidase activity. An N6-acetyllysine modification is found at K63. Y89 is subject to Phosphotyrosine. D140 functions as the For phospholipase activity in the catalytic mechanism. T177 is modified (phosphothreonine; by MAPK). The residue at position 209 (K209) is an N6-acetyllysine; alternate. N6-succinyllysine; alternate is present on K209.

Belongs to the peroxiredoxin family. Prx6 subfamily. As to quaternary structure, homodimer. Interacts with GSTP1; mediates PRDX6 glutathionylation and regeneration. Interacts with APEX1. Interacts with STH. May interact with FAM168B. May interact with HTR2A. In terms of processing, phosphorylation at Thr-177 by MAP kinases increases the phospholipase activity of the enzyme. Phosphorylated form exhibits a greater lysophosphatidylcholine acyltransferase activity compared to the non-phosphorylated form. Post-translationally, irreversibly inactivated by overoxidation of Cys-47 to sulfinic acid (Cys-SO(2)H) and sulfonic acid (Cys-SO(3)H) forms upon oxidative stress.

The protein localises to the cytoplasm. The protein resides in the lysosome. It carries out the reaction a hydroperoxide + 2 glutathione = an alcohol + glutathione disulfide + H2O. The catalysed reaction is a 1,2-diacyl-sn-glycero-3-phosphocholine + H2O = a 1-acyl-sn-glycero-3-phosphocholine + a fatty acid + H(+). The enzyme catalyses a 1-acyl-sn-glycero-3-phosphocholine + an acyl-CoA = a 1,2-diacyl-sn-glycero-3-phosphocholine + CoA. It catalyses the reaction 1-hexadecanoyl-sn-glycero-3-phosphocholine + hexadecanoyl-CoA = 1,2-dihexadecanoyl-sn-glycero-3-phosphocholine + CoA. It carries out the reaction 1,2-dihexadecanoyl-sn-glycero-3-phosphocholine + H2O = 1-hexadecanoyl-sn-glycero-3-phosphocholine + hexadecanoate + H(+). Functionally, thiol-specific peroxidase that catalyzes the reduction of hydrogen peroxide and organic hydroperoxides to water and alcohols, respectively. Can reduce H(2)O(2) and short chain organic, fatty acid, and phospholipid hydroperoxides. Also has phospholipase activity, can therefore either reduce the oxidized sn-2 fatty acyl group of phospholipids (peroxidase activity) or hydrolyze the sn-2 ester bond of phospholipids (phospholipase activity). These activities are dependent on binding to phospholipids at acidic pH and to oxidized phospholipds at cytosolic pH. Plays a role in cell protection against oxidative stress by detoxifying peroxides and in phospholipid homeostasis. Exhibits acyl-CoA-dependent lysophospholipid acyltransferase which mediates the conversion of lysophosphatidylcholine (1-acyl-sn-glycero-3-phosphocholine or LPC) into phosphatidylcholine (1,2-diacyl-sn-glycero-3-phosphocholine or PC). Shows a clear preference for LPC as the lysophospholipid and for palmitoyl CoA as the fatty acyl substrate. In Rattus norvegicus (Rat), this protein is Peroxiredoxin-6 (Prdx6).